A 463-amino-acid polypeptide reads, in one-letter code: L-seryl-tRNA(Sec) selenium transferase (463 aa).

Position 295 is an N6-(pyridoxal phosphate)lysine (Lys295).

It belongs to the SelA family. As to quaternary structure, homodecamer; pentamer of dimers. Binds only one seryl-tRNA(Sec) per dimer. It depends on pyridoxal 5'-phosphate as a cofactor.

The protein resides in the cytoplasm. The catalysed reaction is L-seryl-tRNA(Sec) + selenophosphate + H(+) = L-selenocysteinyl-tRNA(Sec) + phosphate. It functions in the pathway aminoacyl-tRNA biosynthesis; selenocysteinyl-tRNA(Sec) biosynthesis; selenocysteinyl-tRNA(Sec) from L-seryl-tRNA(Sec) (bacterial route): step 1/1. Converts seryl-tRNA(Sec) to selenocysteinyl-tRNA(Sec) required for selenoprotein biosynthesis. The sequence is that of L-seryl-tRNA(Sec) selenium transferase from Salmonella enteritidis PT4 (strain P125109).